Reading from the N-terminus, the 131-residue chain is Glycine cleavage system H protein (131 aa).

Residues 24 to 106 (RAIVGISDHA…YGEGWIMVIE (83 aa)) form the Lipoyl-binding domain. Lysine 65 bears the N6-lipoyllysine mark.

The protein belongs to the GcvH family. In terms of assembly, the glycine cleavage system is composed of four proteins: P, T, L and H. (R)-lipoate serves as cofactor.

Its function is as follows. The glycine cleavage system catalyzes the degradation of glycine. The H protein shuttles the methylamine group of glycine from the P protein to the T protein. In Xylella fastidiosa (strain 9a5c), this protein is Glycine cleavage system H protein.